The sequence spans 380 residues: Epoxyqueuosine reductase (380 aa).

Residue Asp-134 is the Proton donor of the active site. In terms of domain architecture, 4Fe-4S ferredoxin-type 1 spans 178 to 208 (FPPDKPIEDQCGGCTKCIDICPTGALIQGGQ). Residues Cys-188, Cys-191, Cys-194, Cys-198, Cys-214, Cys-240, Cys-243, and Cys-247 each coordinate [4Fe-4S] cluster. In terms of domain architecture, 4Fe-4S ferredoxin-type 2 spans 226–258 (PEEYRDKIGNRIYGCDTCQTVCPKNKGMDFHNH).

The protein belongs to the QueG family. As to quaternary structure, monomer. Cob(II)alamin serves as cofactor. [4Fe-4S] cluster is required as a cofactor.

It localises to the cytoplasm. It carries out the reaction epoxyqueuosine(34) in tRNA + AH2 = queuosine(34) in tRNA + A + H2O. The protein operates within tRNA modification; tRNA-queuosine biosynthesis. Functionally, catalyzes the conversion of epoxyqueuosine (oQ) to queuosine (Q), which is a hypermodified base found in the wobble positions of tRNA(Asp), tRNA(Asn), tRNA(His) and tRNA(Tyr). This is Epoxyqueuosine reductase from Bacillus cereus (strain ATCC 14579 / DSM 31 / CCUG 7414 / JCM 2152 / NBRC 15305 / NCIMB 9373 / NCTC 2599 / NRRL B-3711).